Consider the following 484-residue polypeptide: Dynein regulatory complex subunit 2 (484 aa).

Coiled coils occupy residues V92 to I160 and K374 to N403.

The protein belongs to the DRC2 family. Component of the nexin-dynein regulatory complex (N-DRC). Interacts with DRC1.

The protein resides in the cytoplasm. Its subcellular location is the cytoskeleton. It localises to the flagellum basal body. It is found in the cell projection. The protein localises to the cilium. The protein resides in the flagellum. Its subcellular location is the flagellum axoneme. Its function is as follows. Component of the nexin-dynein regulatory complex (N-DRC), a key regulator of ciliary/flagellar motility which maintains the alignment and integrity of the distal axoneme and regulates microtubule sliding in motile axonemes. Plays a critical role in the assembly of N-DRC and also stabilizes the assembly of multiple inner dynein arms and radial spokes. Coassembles with DRC1 to form a central scaffold needed for assembly of the N-DRC and its attachment to the outer doublet microtubules. This Macaca fascicularis (Crab-eating macaque) protein is Dynein regulatory complex subunit 2 (CCDC65).